The following is a 452-amino-acid chain: BUB3-interacting and GLEBS motif-containing protein ZNF207 (452 aa).

The segment at 1–92 is microtubule-binding region; sequence MGRKKKKQLK…EGIPEKDMEE (92 aa). 2 consecutive C2H2-type zinc fingers follow at residues 11-34 and 35-58; these read PWCW…KAKH and FKCH…MQVH. 2 disordered regions span residues 99-131 and 298-330; these read QKTQ…SFQQ and STMS…TSAT. The span at 113-123 shows a compositional bias: acidic residues; sequence DDSDYDDDDDT. The tract at residues 329–361 is GLEBS; it reads ATSKLVHPDEDISLEEKRAQLPKYQRNLPRPGQ.

Interacts (via GLEBS region) with bub3.

Its subcellular location is the nucleus. It is found in the chromosome. It localises to the centromere. The protein resides in the kinetochore. The protein localises to the cytoplasm. Its subcellular location is the cytoskeleton. It is found in the spindle. Functionally, kinetochore- and microtubule-binding protein that plays a key role in spindle assembly. Znf207/BuGZ is mainly composed of disordered low-complexity regions and undergoes phase transition or coacervation to form temperature-dependent liquid droplets. Coacervation promotes microtubule bundling and concentrates tubulin, promoting microtubule polymerization and assembly of spindle and spindle matrix by concentrating its building blocks. The polypeptide is BUB3-interacting and GLEBS motif-containing protein ZNF207 (Xenopus laevis (African clawed frog)).